The following is a 180-amino-acid chain: UPF0149 protein XC_0904 (180 aa).

It belongs to the UPF0149 family.

This chain is UPF0149 protein XC_0904, found in Xanthomonas campestris pv. campestris (strain 8004).